Here is a 412-residue protein sequence, read N- to C-terminus: MNKLSINDVDVRDKRVLIRVDFNVPLKNGQISNNQRIAAALPTIKLALEKGAKSVVLMSHLGRPDGRPIHAASMKPVVAELENLLGKKIMFLEDCVGSKVEAACANPEPGSVILLENLRFHVEKEGKGKDAQGNKAKADDAAVAAFRASLSKLGDVYVNDAFGTAHRAHSSMVGVDLPVKACGLLMKKELDYFAKALENPARPFLAILGGAKVADKIQLIENLMDKVNEMIIGGGMAFTFLKVLNNMDIGGSLFDEGAKIVGRLVDKAKEKGVKLHLPSDFITGDKFADVAKSATASVASGIPEGWMGLDVGTKTNEVFQKVIEGAKTIVWNGPPGVFEFENFSTGSKQMMDSVVRATEAGTITIIGGCDTATCAKNSNATEKVSHVSTGSGTSLELLEGKILPGVAALSQP.

Positions 20, 21, 22, 23, 35, 36, 59, 60, 62, 63, 118, 119, 166, and 167 each coordinate (2R)-3-phosphoglycerate. Gly210 contacts ADP. Gly210 serves as a coordination point for CDP. Residues Ala211 and Lys212 each contribute to the AMP site. Ala211 serves as a coordination point for ATP. Residue Ala211 participates in Mg(2+) binding. Residues Ala214 and Asp215 each coordinate Mg(2+). Asp215 provides a ligand contact to CDP. Position 216 (Lys216) interacts with AMP. Lys216 lines the ATP pocket. Residue Gly234 coordinates ADP. Gly234 contributes to the CDP binding site. 2 residues coordinate AMP: Gly235 and Gly308. The ATP site is built by Gly235 and Gly308. Positions 333 and 338 each coordinate CDP. Phe338 provides a ligand contact to ADP. Residue Glu339 participates in AMP binding. Positions 339, 370, and 371 each coordinate ATP. Asp370 provides a ligand contact to Mg(2+).

Belongs to the phosphoglycerate kinase family. As to quaternary structure, monomer. Requires Mg(2+) as cofactor.

Its subcellular location is the cytoplasm. It carries out the reaction (2R)-3-phosphoglycerate + ATP = (2R)-3-phospho-glyceroyl phosphate + ADP. Its pathway is carbohydrate degradation; glycolysis; pyruvate from D-glyceraldehyde 3-phosphate: step 2/5. Catalyzes one of the two ATP producing reactions in the glycolytic pathway via the reversible conversion of 1,3-diphosphoglycerate to 3-phosphoglycerate. In addition to its role as a glycolytic enzyme, it seems that PGK-1 acts as a polymerase alpha cofactor protein (primer recognition protein). May play a role in sperm motility. In Aplysia californica (California sea hare), this protein is Phosphoglycerate kinase (PGK).